Here is a 643-residue protein sequence, read N- to C-terminus: Threonine--tRNA ligase (643 aa).

The 61-residue stretch at 1–61 folds into the TGS domain; that stretch reads MIKVSLKDGS…NEDVSLSICT (61 aa). The interval 240 to 540 is catalytic; it reads DHNKLGRELK…LIEKYAGAFP (301 aa). Residues Cys335, His386, and His517 each coordinate Zn(2+).

This sequence belongs to the class-II aminoacyl-tRNA synthetase family. In terms of assembly, homodimer. Zn(2+) serves as cofactor.

The protein localises to the cytoplasm. The enzyme catalyses tRNA(Thr) + L-threonine + ATP = L-threonyl-tRNA(Thr) + AMP + diphosphate + H(+). Functionally, catalyzes the attachment of threonine to tRNA(Thr) in a two-step reaction: L-threonine is first activated by ATP to form Thr-AMP and then transferred to the acceptor end of tRNA(Thr). Also edits incorrectly charged L-seryl-tRNA(Thr). The protein is Threonine--tRNA ligase of Clostridium botulinum (strain Alaska E43 / Type E3).